The primary structure comprises 57 residues: MAVPKKKTSKGKRNQRHAVWKAKAGDAAQKALSLGKSILSGRAQGFVYPIQEEDSEE.

Positions 1-20 are enriched in basic residues; that stretch reads MAVPKKKTSKGKRNQRHAVW. The tract at residues 1–23 is disordered; the sequence is MAVPKKKTSKGKRNQRHAVWKAK.

The protein belongs to the bacterial ribosomal protein bL32 family.

In Prochlorococcus marinus (strain SARG / CCMP1375 / SS120), this protein is Large ribosomal subunit protein bL32.